A 567-amino-acid chain; its full sequence is TGF-beta receptor type-2 (567 aa).

An N-terminal signal peptide occupies residues 1 to 22 (MGRGLLRGLWPLHIVLWTRIAS). The Extracellular portion of the chain corresponds to 23-166 (TIPPHVQKSV…NPDLLLVIFQ (144 aa)). 6 disulfide bridges follow: Cys-51/Cys-84, Cys-54/Cys-71, Cys-61/Cys-67, Cys-77/Cys-101, Cys-121/Cys-136, and Cys-138/Cys-143. 2 N-linked (GlcNAc...) asparagine glycosylation sites follow: Asn-70 and Asn-94. An N-linked (GlcNAc...) asparagine glycan is attached at Asn-154. The chain crosses the membrane as a helical span at residues 167–187 (VTGISLLPPLGVAISVIIIFY). At 188–567 (CYRVNRQQKL…PEDGSLNTTK (380 aa)) the chain is on the cytoplasmic side. The Protein kinase domain occupies 244–544 (IELDTLVGKG…AERFSELEHL (301 aa)). ATP-binding positions include 250–258 (VGKGRFAEV) and Lys-277. The active-site Proton acceptor is the Asp-379. Residues Ser-409, Ser-548, and Ser-553 each carry the phosphoserine modification. The tract at residues 439–567 (VESFKQTDVY…PEDGSLNTTK (129 aa)) is sufficient for interaction with CLU.

The protein belongs to the protein kinase superfamily. TKL Ser/Thr protein kinase family. TGFB receptor subfamily. In terms of assembly, homodimer. Heterohexamer; TGFB1, TGFB2 and TGFB3 homodimeric ligands assemble a functional receptor composed of two TGFBR1 and TGFBR2 heterodimers to form a ligand-receptor heterohexamer. The respective affinity of TGFRB1 and TGFRB2 for the ligands may modulate the kinetics of assembly of the receptor and may explain the different biological activities of TGFB1, TGFB2 and TGFB3. Component of a complex composed of TSC22D1 (via N-terminus), TGFBR1 and TGFBR2; the interaction between TSC22D1 and TGFBR1 is inhibited by SMAD7 and promoted by TGFB1. Interacts with DAXX. Interacts with DYNLT4. Interacts with ZFYVE9; ZFYVE9 recruits SMAD2 and SMAD3 to the TGF-beta receptor. Interacts with and is activated by SCUBE3; this interaction does not affect TGFB1-binding to TGFBR2. Interacts with VPS39; this interaction is independent of the receptor kinase activity and of the presence of TGF-beta. Interacts with CLU. Homodimer; disulfide-linked. The cofactor is Mg(2+). It depends on Mn(2+) as a cofactor. Phosphorylated on a Ser/Thr residue in the cytoplasmic domain.

It localises to the cell membrane. Its subcellular location is the membrane raft. The protein resides in the secreted. The enzyme catalyses L-threonyl-[receptor-protein] + ATP = O-phospho-L-threonyl-[receptor-protein] + ADP + H(+). The catalysed reaction is L-seryl-[receptor-protein] + ATP = O-phospho-L-seryl-[receptor-protein] + ADP + H(+). Its function is as follows. Transmembrane serine/threonine kinase forming with the TGF-beta type I serine/threonine kinase receptor, TGFBR1, the non-promiscuous receptor for the TGF-beta cytokines TGFB1, TGFB2 and TGFB3. Transduces the TGFB1, TGFB2 and TGFB3 signal from the cell surface to the cytoplasm and thus regulates a plethora of physiological and pathological processes including cell cycle arrest in epithelial and hematopoietic cells, control of mesenchymal cell proliferation and differentiation, wound healing, extracellular matrix production, immunosuppression and carcinogenesis. The formation of the receptor complex composed of 2 TGFBR1 and 2 TGFBR2 molecules symmetrically bound to the cytokine dimer results in the phosphorylation and activation of TGFBR1 by the constitutively active TGFBR2. Activated TGFBR1 phosphorylates SMAD2 which dissociates from the receptor and interacts with SMAD4. The SMAD2-SMAD4 complex is subsequently translocated to the nucleus where it modulates the transcription of the TGF-beta-regulated genes. This constitutes the canonical SMAD-dependent TGF-beta signaling cascade. Also involved in non-canonical, SMAD-independent TGF-beta signaling pathways. Functionally, has transforming growth factor beta-activated receptor activity. Binds TGFB1, TGFB2 and TGFB3 in the picomolar affinity range without the participation of additional receptors. Blocks activation of SMAD2 and SMAD3 by TGFB1. This chain is TGF-beta receptor type-2 (TGFBR2), found in Homo sapiens (Human).